A 387-amino-acid polypeptide reads, in one-letter code: S-adenosylmethionine synthase (387 aa).

H17 contacts ATP. D19 provides a ligand contact to Mg(2+). E45 is a K(+) binding site. Positions 58 and 101 each coordinate L-methionine. The tract at residues Q101–R111 is flexible loop. Residues D168–K170, R234–F235, D243, R249–K250, A266, and K270 contribute to the ATP site. Position 243 (D243) interacts with L-methionine. Position 274 (K274) interacts with L-methionine.

It belongs to the AdoMet synthase family. As to quaternary structure, homotetramer; dimer of dimers. The cofactor is Mg(2+). K(+) serves as cofactor.

The protein resides in the cytoplasm. The enzyme catalyses L-methionine + ATP + H2O = S-adenosyl-L-methionine + phosphate + diphosphate. The protein operates within amino-acid biosynthesis; S-adenosyl-L-methionine biosynthesis; S-adenosyl-L-methionine from L-methionine: step 1/1. Catalyzes the formation of S-adenosylmethionine (AdoMet) from methionine and ATP. The overall synthetic reaction is composed of two sequential steps, AdoMet formation and the subsequent tripolyphosphate hydrolysis which occurs prior to release of AdoMet from the enzyme. The polypeptide is S-adenosylmethionine synthase (Bordetella bronchiseptica (strain ATCC BAA-588 / NCTC 13252 / RB50) (Alcaligenes bronchisepticus)).